We begin with the raw amino-acid sequence, 78 residues long: Exodeoxyribonuclease 7 small subunit (78 aa).

Belongs to the XseB family. As to quaternary structure, heterooligomer composed of large and small subunits.

Its subcellular location is the cytoplasm. The enzyme catalyses Exonucleolytic cleavage in either 5'- to 3'- or 3'- to 5'-direction to yield nucleoside 5'-phosphates.. Functionally, bidirectionally degrades single-stranded DNA into large acid-insoluble oligonucleotides, which are then degraded further into small acid-soluble oligonucleotides. The sequence is that of Exodeoxyribonuclease 7 small subunit from Actinobacillus succinogenes (strain ATCC 55618 / DSM 22257 / CCUG 43843 / 130Z).